The chain runs to 883 residues: Phosphoenolpyruvate carboxylase (883 aa).

Residues His138 and Lys546 contribute to the active site.

The protein belongs to the PEPCase type 1 family. The cofactor is Mg(2+).

It catalyses the reaction oxaloacetate + phosphate = phosphoenolpyruvate + hydrogencarbonate. In terms of biological role, forms oxaloacetate, a four-carbon dicarboxylic acid source for the tricarboxylic acid cycle. The polypeptide is Phosphoenolpyruvate carboxylase (Enterobacter sp. (strain 638)).